Here is a 339-residue protein sequence, read N- to C-terminus: MKALMFKAPLQAVLTERDVPEPAPGEALVKLAYNSICGSDLSFYKGVWHGFTYPVVPGHEWSGTVVEAGGGAADLVGQNVVGDLTVACGSCRHCTVGKPTLCADLQELGFTRDGACAEYMTVPTGNLHRLPEGLSLREATQVEPLAVALNAVDRLAVTAGEKVAITGAGGIGLLLAQAVRLRGAEVTVLAEPVTERRQAAHALGVPHTVGGDPGELVGFVEKHPELTPDVVLEASGYPLAVQEAVEAVRSGGRIGLIGYRIEEAATMAPHHIVVKVLSLQASMGPGDRFGEAIELLAAGAVDVDALLSHEFGLADHDRALDVALRRADGNTRSYFNLRA.

Residues Cys37, His59, Cys88, Cys91, Cys94, Cys102, and Glu143 each coordinate Zn(2+).

Belongs to the zinc-containing alcohol dehydrogenase family. DOIA dehydrogenase subfamily. It depends on Zn(2+) as a cofactor.

The catalysed reaction is 2-deoxy-scyllo-inosamine + NADP(+) = 3-amino-2,3-dideoxy-scyllo-inosose + NADPH + H(+). The enzyme catalyses 2-deoxy-scyllo-inosamine + NAD(+) = 3-amino-2,3-dideoxy-scyllo-inosose + NADH + H(+). Its pathway is metabolic intermediate biosynthesis; 2-deoxystreptamine biosynthesis; 2-deoxystreptamine from D-glucose 6-phosphate: step 3/4. The protein operates within antibiotic biosynthesis; paromomycin biosynthesis. Its function is as follows. Catalyzes the oxidation of 2-deoxy-scyllo-inosamine (DOIA) with NAD(+) or NADP(+), forming 3-amino-2,3-dideoxy-scyllo-inosose (amino-DOI). In Streptomyces paromomycinus (Streptomyces rimosus subsp. paromomycinus), this protein is 2-deoxy-scyllo-inosamine dehydrogenase (parE).